Here is a 470-residue protein sequence, read N- to C-terminus: Uronate isomerase (470 aa).

It belongs to the metallo-dependent hydrolases superfamily. Uronate isomerase family.

The enzyme catalyses D-glucuronate = D-fructuronate. It carries out the reaction aldehydo-D-galacturonate = keto-D-tagaturonate. Its pathway is carbohydrate metabolism; pentose and glucuronate interconversion. This is Uronate isomerase from Escherichia coli O157:H7 (strain EC4115 / EHEC).